Reading from the N-terminus, the 974-residue chain is Receptor-like protein 7 (974 aa).

The signal sequence occupies residues 1–24 (MSFLIRSICFLILIPSFLITFVSA). The Extracellular segment spans residues 25–930 (TQHLCHSDQK…EEEEEESFSW (906 aa)). N-linked (GlcNAc...) asparagine glycans are attached at residues asparagine 54 and asparagine 90. 6 LRR repeats span residues 96 to 120 (LRHL…EFDK), 122 to 145 (TGLE…LLQL), 147 to 166 (KLVS…SFHY), 181 to 204 (LRNL…EFSN), 206 to 229 (RSLR…ILLI), and 230 to 252 (PNLQ…VFHE). N-linked (GlcNAc...) asparagine glycosylation is present at asparagine 253. LRR repeat units follow at residues 254-277 (NSLL…ISSL), 278-301 (KNLT…LGNL), 302-325 (SHLS…IGNL), 327-349 (QLTN…LSNL), and 350-373 (TKLN…ISQL). Asparagine 279 and asparagine 300 each carry an N-linked (GlcNAc...) asparagine glycan. An N-linked (GlcNAc...) asparagine glycan is attached at asparagine 348. One copy of the LRR 12; degenerate repeat lies at 374–396 (SKLKFFFADDNPFIGAILSPLLK). LRR repeat units lie at residues 397-422 (IPSL…IFML), 425-448 (LETF…VFSS), 454-472 (TLYI…SDFP), 473-495 (SNLE…IRKG), 496-519 (RNLQ…LWRM), 521-542 (TLNS…VKAS), 544-570 (ESQL…SLRY), 572-589 (SGSN…ICGL), 590-616 (SSLE…LMSS), 618-638 (SDLD…FMNA), 639-662 (TKLR…LTGC), 664-685 (SLEV…ELNS), 687-712 (QKLQ…VWFG), 713-737 (FPQL…YFMN), 785-809 (LTIY…IGLL), 810-833 (KELR…LANL), 834-857 (KNLE…LGTL), and 859-882 (SLAW…QFQR). N-linked (GlcNAc...) asparagine glycans are attached at residues asparagine 434, asparagine 466, and asparagine 484. The N-linked (GlcNAc...) asparagine glycan is linked to asparagine 529. 4 N-linked (GlcNAc...) asparagine glycosylation sites follow: asparagine 577, asparagine 603, asparagine 624, and asparagine 637. An N-linked (GlcNAc...) asparagine glycan is attached at asparagine 737. 3 N-linked (GlcNAc...) asparagine glycosylation sites follow: asparagine 816, asparagine 845, and asparagine 864. The tract at residues 899-923 (LENVCGHIKESTPTQTEPLETKEEE) is disordered. Residues 931-951 (IAAGLGFAPGVVFGLAMGYIV) form a helical membrane-spanning segment. Over 952 to 974 (VSYKHQWFMKTFGRSKQQNTRTR) the chain is Cytoplasmic.

It belongs to the RLP family.

The protein localises to the cell membrane. The protein is Receptor-like protein 7 of Arabidopsis thaliana (Mouse-ear cress).